The sequence spans 296 residues: GTPase Era (296 aa).

Residues 3–170 (KSGFITIVGR…LELMVKYLPE (168 aa)) form the Era-type G domain. A G1 region spans residues 11-18 (GRPNVGKS). Position 11–18 (11–18 (GRPNVGKS)) interacts with GTP. A G2 region spans residues 37–41 (QTTRN). The G3 stretch occupies residues 58–61 (DTPG). GTP-binding positions include 58–62 (DTPGI) and 120–123 (NKVD). Positions 120-123 (NKVD) are G4. The tract at residues 149–151 (ISA) is G5. In terms of domain architecture, KH type-2 spans 201–278 (LSQEVPHGIA…NIKIWVKVRK (78 aa)).

Belongs to the TRAFAC class TrmE-Era-EngA-EngB-Septin-like GTPase superfamily. Era GTPase family. In terms of assembly, monomer.

It is found in the cytoplasm. The protein localises to the cell membrane. An essential GTPase that binds both GDP and GTP, with rapid nucleotide exchange. Plays a role in 16S rRNA processing and 30S ribosomal subunit biogenesis and possibly also in cell cycle regulation and energy metabolism. The protein is GTPase Era of Clostridium perfringens (strain 13 / Type A).